A 721-amino-acid polypeptide reads, in one-letter code: DNA ligase (721 aa).

Over residues 1-19 (MTAKKQGAQASASAPSGDS) the composition is skewed to low complexity. The tract at residues 1-23 (MTAKKQGAQASASAPSGDSPAER) is disordered. NAD(+)-binding positions include 48-52 (DADYD), 97-98 (SL), and glutamate 162. The N6-AMP-lysine intermediate role is filled by lysine 164. NAD(+)-binding residues include arginine 185, glutamate 221, lysine 338, and lysine 362. Residues cysteine 456, cysteine 459, cysteine 474, and cysteine 480 each contribute to the Zn(2+) site. Residues 639–721 (RAPLPLAGKT…LKLLAEVGAA (83 aa)) enclose the BRCT domain.

The protein belongs to the NAD-dependent DNA ligase family. LigA subfamily. The cofactor is Mg(2+). It depends on Mn(2+) as a cofactor.

The enzyme catalyses NAD(+) + (deoxyribonucleotide)n-3'-hydroxyl + 5'-phospho-(deoxyribonucleotide)m = (deoxyribonucleotide)n+m + AMP + beta-nicotinamide D-nucleotide.. Functionally, DNA ligase that catalyzes the formation of phosphodiester linkages between 5'-phosphoryl and 3'-hydroxyl groups in double-stranded DNA using NAD as a coenzyme and as the energy source for the reaction. It is essential for DNA replication and repair of damaged DNA. The protein is DNA ligase of Cupriavidus metallidurans (strain ATCC 43123 / DSM 2839 / NBRC 102507 / CH34) (Ralstonia metallidurans).